We begin with the raw amino-acid sequence, 329 residues long: MVKTQRVVITPGEPAGIGPDLVVQLAQREWPVELVVCADATLLTDRAAMLGLPLTLRPYSPNSPAQPQTAGTLTLLPVALRESVTAGQLAIENGHYVVETLARACDGCLNGEFAALITGPVHKGVINDAGIPFTGHTEFFEERSQAKKVVMMLATEELRVALATTHLPLRDIADAITPALLHEVIAILHHDLRTKFGIAEPRILVCGLNPHAGEGGHMGTEEIDTIIPVLNELRAQGMKLNGPLPADTLFQPKYLDNADAVLAMYHDQGLPVLKYQGFGRGVNITLGLPFIRTSVDHGTALELAGRGEADVGSFITALNLAIKMIVNTQ.

Residues His136 and Thr137 each coordinate substrate. His166, His211, and His266 together coordinate a divalent metal cation. The substrate site is built by Lys274, Asn283, and Arg292.

This sequence belongs to the PdxA family. Homodimer. Requires Zn(2+) as cofactor. Mg(2+) serves as cofactor. The cofactor is Co(2+).

It is found in the cytoplasm. The catalysed reaction is 4-(phosphooxy)-L-threonine + NAD(+) = 3-amino-2-oxopropyl phosphate + CO2 + NADH. The protein operates within cofactor biosynthesis; pyridoxine 5'-phosphate biosynthesis; pyridoxine 5'-phosphate from D-erythrose 4-phosphate: step 4/5. Catalyzes the NAD(P)-dependent oxidation of 4-(phosphooxy)-L-threonine (HTP) into 2-amino-3-oxo-4-(phosphooxy)butyric acid which spontaneously decarboxylates to form 3-amino-2-oxopropyl phosphate (AHAP). The protein is 4-hydroxythreonine-4-phosphate dehydrogenase of Shigella sonnei (strain Ss046).